The primary structure comprises 238 residues: Probable transcriptional regulatory protein YeeN (238 aa).

It belongs to the TACO1 family. YeeN subfamily.

The protein resides in the cytoplasm. This is Probable transcriptional regulatory protein YeeN from Salmonella typhi.